Reading from the N-terminus, the 277-residue chain is Probable septum site-determining protein MinC (277 aa).

The interval 107 to 168 is disordered; sequence TEGLLPGRKG…ESGPQVSHYD (62 aa). The span at 122–142 shows a compositional bias: basic and acidic residues; that stretch reads GKPDGKAAEGRAPDHGTEGRA.

This sequence belongs to the MinC family. Interacts with MinD and FtsZ.

Functionally, cell division inhibitor that blocks the formation of polar Z ring septums. Rapidly oscillates between the poles of the cell to destabilize FtsZ filaments that have formed before they mature into polar Z rings. Prevents FtsZ polymerization. In Mesorhizobium japonicum (strain LMG 29417 / CECT 9101 / MAFF 303099) (Mesorhizobium loti (strain MAFF 303099)), this protein is Probable septum site-determining protein MinC.